Here is a 195-residue protein sequence, read N- to C-terminus: dITP/XTP pyrophosphatase (195 aa).

Substrate is bound at residue 8–13; sequence SNNQGK. Mg(2+) is bound by residues Glu39 and Asp68. Catalysis depends on Asp68, which acts as the Proton acceptor. Substrate contacts are provided by residues Ser69, 149 to 152, Lys172, and 177 to 178; these read FGYD and HR.

Belongs to the HAM1 NTPase family. As to quaternary structure, homodimer. It depends on Mg(2+) as a cofactor.

It carries out the reaction XTP + H2O = XMP + diphosphate + H(+). It catalyses the reaction dITP + H2O = dIMP + diphosphate + H(+). The enzyme catalyses ITP + H2O = IMP + diphosphate + H(+). In terms of biological role, pyrophosphatase that catalyzes the hydrolysis of nucleoside triphosphates to their monophosphate derivatives, with a high preference for the non-canonical purine nucleotides XTP (xanthosine triphosphate), dITP (deoxyinosine triphosphate) and ITP. Seems to function as a house-cleaning enzyme that removes non-canonical purine nucleotides from the nucleotide pool, thus preventing their incorporation into DNA/RNA and avoiding chromosomal lesions. This chain is dITP/XTP pyrophosphatase, found in Staphylococcus aureus (strain MRSA252).